The primary structure comprises 82 residues: Exodeoxyribonuclease 7 small subunit (82 aa).

It belongs to the XseB family. In terms of assembly, heterooligomer composed of large and small subunits.

The protein resides in the cytoplasm. It catalyses the reaction Exonucleolytic cleavage in either 5'- to 3'- or 3'- to 5'-direction to yield nucleoside 5'-phosphates.. Bidirectionally degrades single-stranded DNA into large acid-insoluble oligonucleotides, which are then degraded further into small acid-soluble oligonucleotides. This Mannheimia succiniciproducens (strain KCTC 0769BP / MBEL55E) protein is Exodeoxyribonuclease 7 small subunit.